A 343-amino-acid polypeptide reads, in one-letter code: Heat-inducible transcription repressor HrcA (343 aa).

The protein belongs to the HrcA family.

Functionally, negative regulator of class I heat shock genes (grpE-dnaK-dnaJ and groELS operons). Prevents heat-shock induction of these operons. The sequence is that of Heat-inducible transcription repressor HrcA from Clostridium botulinum (strain Eklund 17B / Type B).